Reading from the N-terminus, the 478-residue chain is MLWKKSLSELRELLKRGEVSPKEVVESFYDRYNQTEEKVKAYITPLYGKALKQAESLKERELPLFGIPIAVKDNILVEGEKTTCASKILENFVAPYDATVIERLKKAGALIVGKTNLDEFAMGSSTEYSAFFPTKNPWDLERVPGGSSGGSAASVAVLSAPVSLGSDTGGSIRQPASFCGVIGIKPTYGRVSRYGLVAFASSLDQIGVFGRRTEDVALVLEVISGWDEKDSTSAKVPVPEWSEEVKKEVKGLKIGLPKEFFEYELQPQVKEAFENFIKELEKEGFEIKEVSLPHVKYSIPTYYIIAPSEASSNLARYDGVRYGYRAKEYKDIFEMYARTRDEGFGPEVKRRIMLGTFALSAGYYDAYYLKAQKVRRLITNDFLKAFEEVDVIASPTTPTLPFKFGERLENPIEMYLSDILTVPANLAGLPAISIPIAWKDGLPVGGQLIGKHWDETTLLQISYLWEQKFKHYEKIPLT.

Residues Lys-72 and Ser-147 each act as charge relay system in the active site. The active-site Acyl-ester intermediate is the Ser-171.

It belongs to the amidase family. GatA subfamily. In terms of assembly, heterotrimer of A, B and C subunits.

It catalyses the reaction L-glutamyl-tRNA(Gln) + L-glutamine + ATP + H2O = L-glutaminyl-tRNA(Gln) + L-glutamate + ADP + phosphate + H(+). In terms of biological role, allows the formation of correctly charged Gln-tRNA(Gln) through the transamidation of misacylated Glu-tRNA(Gln) in organisms which lack glutaminyl-tRNA synthetase. The reaction takes place in the presence of glutamine and ATP through an activated gamma-phospho-Glu-tRNA(Gln). The chain is Glutamyl-tRNA(Gln) amidotransferase subunit A (gatA) from Aquifex aeolicus (strain VF5).